We begin with the raw amino-acid sequence, 438 residues long: Polycomb protein eed-B (438 aa).

The interval 1-70 (MSEASGRAAG…GRKGWGKGKW (70 aa)) is disordered. Residues 40–57 (SIESGTNTERPDTPTNAA) are compositionally biased toward polar residues. WD repeat units lie at residues 88-131 (DHNQ…DIRL), 139-182 (DADE…CIKH), 185-225 (GHGN…LVAI), 231-270 (GHRDEVLSADYDLLGEKIMSCGMDHSLKLWRINSLRMKTA), 301-338 (IHRNYVDCVRWLGDLILSKSCENAIVCWKPGKMEDDIE), 356-396 (SQCD…PHKA), and 405-438 (KCASAIRQTSFSRDSSVLIAVCDDSTIWRWDRLR).

The protein belongs to the WD repeat ESC family. Component of the prc2/eed-ezh2 complex. Can interact with ezh2, hdac1 and taf9. Interacts with yy1.

It localises to the nucleus. Its function is as follows. Polycomb group (PcG) protein. Component of the prc2/eed-ezh2 complex, which methylates 'Lys-9' and 'Lys-27' of histone H3, leading to transcriptional repression of the affected target gene. May play a role in neural induction. This Xenopus laevis (African clawed frog) protein is Polycomb protein eed-B (eed-b).